A 213-amino-acid polypeptide reads, in one-letter code: Redox-sensing transcriptional repressor Rex (213 aa).

A DNA-binding region (H-T-H motif) is located at residues 17-56 (LYYRIFKRFHSENIEKASSKQIAEAIGIDSATVRRDFSYF). 91-96 (GVGNIG) contributes to the NAD(+) binding site.

It belongs to the transcriptional regulatory Rex family. As to quaternary structure, homodimer.

It is found in the cytoplasm. Functionally, modulates transcription in response to changes in cellular NADH/NAD(+) redox state. In Streptococcus mutans serotype c (strain ATCC 700610 / UA159), this protein is Redox-sensing transcriptional repressor Rex.